Reading from the N-terminus, the 242-residue chain is Glucosamine-6-phosphate deaminase (242 aa).

Catalysis depends on Asp-67, which acts as the Proton acceptor; for enolization step. Catalysis depends on Asn-136, which acts as the For ring-opening step. Catalysis depends on His-138, which acts as the Proton acceptor; for ring-opening step. The For ring-opening step role is filled by Glu-143.

The protein belongs to the glucosamine/galactosamine-6-phosphate isomerase family. NagB subfamily.

The catalysed reaction is alpha-D-glucosamine 6-phosphate + H2O = beta-D-fructose 6-phosphate + NH4(+). Its pathway is amino-sugar metabolism; N-acetylneuraminate degradation; D-fructose 6-phosphate from N-acetylneuraminate: step 5/5. Functionally, catalyzes the reversible isomerization-deamination of glucosamine 6-phosphate (GlcN6P) to form fructose 6-phosphate (Fru6P) and ammonium ion. The protein is Glucosamine-6-phosphate deaminase of Clostridium perfringens (strain 13 / Type A).